A 207-amino-acid polypeptide reads, in one-letter code: Holliday junction branch migration complex subunit RuvA (207 aa).

Residues 1–64 (MISYIKGELA…EDECSLFGFL (64 aa)) form a domain I region. Residues 65–143 (TRDDLSMFKM…LDEVFESALS (79 aa)) form a domain II region. The flexible linker stretch occupies residues 144–155 (KNKKADNNSNVS). A domain III region spans residues 156-207 (NVMMIRNDAVEALVSLGYSSKDALVAVKEVEDIENKDSETVLKEALKKLVKF).

It belongs to the RuvA family. As to quaternary structure, homotetramer. Forms an RuvA(8)-RuvB(12)-Holliday junction (HJ) complex. HJ DNA is sandwiched between 2 RuvA tetramers; dsDNA enters through RuvA and exits via RuvB. An RuvB hexamer assembles on each DNA strand where it exits the tetramer. Each RuvB hexamer is contacted by two RuvA subunits (via domain III) on 2 adjacent RuvB subunits; this complex drives branch migration. In the full resolvosome a probable DNA-RuvA(4)-RuvB(12)-RuvC(2) complex forms which resolves the HJ.

The protein resides in the cytoplasm. The RuvA-RuvB-RuvC complex processes Holliday junction (HJ) DNA during genetic recombination and DNA repair, while the RuvA-RuvB complex plays an important role in the rescue of blocked DNA replication forks via replication fork reversal (RFR). RuvA specifically binds to HJ cruciform DNA, conferring on it an open structure. The RuvB hexamer acts as an ATP-dependent pump, pulling dsDNA into and through the RuvAB complex. HJ branch migration allows RuvC to scan DNA until it finds its consensus sequence, where it cleaves and resolves the cruciform DNA. This is Holliday junction branch migration complex subunit RuvA from Lachnospira eligens (strain ATCC 27750 / DSM 3376 / VPI C15-48 / C15-B4) (Eubacterium eligens).